Reading from the N-terminus, the 124-residue chain is Large ribosomal subunit protein bL19 (124 aa).

The protein belongs to the bacterial ribosomal protein bL19 family.

Functionally, this protein is located at the 30S-50S ribosomal subunit interface and may play a role in the structure and function of the aminoacyl-tRNA binding site. The polypeptide is Large ribosomal subunit protein bL19 (Zymomonas mobilis subsp. mobilis (strain ATCC 31821 / ZM4 / CP4)).